We begin with the raw amino-acid sequence, 1277 residues long: Membrane-associated guanylate kinase, WW and PDZ domain-containing protein 2 (1277 aa).

One can recognise a PDZ domain in the interval 17–101 (ESVIGRNPEG…PLRLKCVKQG (85 aa)). One can recognise a Guanylate kinase-like domain in the interval 109-283 (RHYLNLRFQK…APVYSQPEEL (175 aa)). Residues 205–308 (PGATPSAEGK…EDSDPLPDNW (104 aa)) are disordered. Residues 281-296 (EELKDQMDDTKSTKPE) show a composition bias toward basic and acidic residues. WW domains are found at residues 302–335 (DPLP…DPRL) and 348–381 (NELP…NPVL). Residues 302–381 (DPLPDNWEMA…RRTQFENPVL (80 aa)) are interaction with DDN. Tyr362 carries the phosphotyrosine modification. The 85-residue stretch at 426–510 (STTLKKSNMG…SVNLVLCRGY (85 aa)) folds into the PDZ 1 domain. Positions 556–575 (QSVPDITDRPPHSLHSMPAD) are disordered. The PDZ 2 domain occupies 605–683 (TLTIVKGAKG…ETSLIIHRGG (79 aa)). Ser686 bears the Phosphoserine mark. The PDZ 3 domain occupies 778-860 (DVHLRRMESG…NGQVNLTVRR (83 aa)). Phosphotyrosine is present on Tyr827. The disordered stretch occupies residues 869–913 (CPENGRSPGSVSTHHSSPRSDYATYANSNHAAPSNNASPPEGFAS). A phosphoserine mark is found at Ser884 and Ser885. The span at 894-908 (ANSNHAAPSNNASPP) shows a compositional bias: low complexity. The PDZ 4 domain maps to 920–1010 (DVIIHRKENE…SVTLRIIPQE (91 aa)). Over residues 1011 to 1042 (ELNNPTSAPSSEKQSPMAQQHSPLAQQHSPLA) the composition is skewed to polar residues. The disordered stretch occupies residues 1011-1130 (ELNNPTSAPS…PDTRQYPLSD (120 aa)). Residues 1069–1085 (NSYRSEVKARQDVKPDI) show a composition bias toward basic and acidic residues. The region spanning 1141–1223 (TVDMEKGAKG…RVRLLLKRGT (83 aa)) is the PDZ 5 domain.

Belongs to the MAGUK family. In terms of assembly, interacts (via its WW domains) with DRPLA. Interacts with CTNNB1, ACVR2A, SMAD2 and SMAD3. Part of a complex consisting of MAGI2/ARIP1, ACVR2A, ACVR1B and SMAD3. May interact with HTR2A and IGSF9. Interacts with HTR4. Interacts (via guanylate kinase domain) with DLGAP1. Interacts (via PDZ domains) with GRIN2A, GRID2 and NLGN1. Interacts with CTNND2. Interacts with MAGUIN-1. Interacts (via its second PDZ domain) with PTEN (via unphosphorylated C-terminus); this interaction diminishes the degradation rate of PTEN. Found in a complex, at least composed of KIDINS220, MAGI2, NTRK1 and RAPGEF2; the complex is mainly formed at late endosomes in a NGF-dependent manner. Interacts with RAPGEF2; the interaction occurs before or after nerve growth factor (NGF) stimulation. Isoform 1 interacts (via PDZ domain) with KIDINS220 isoform 2 (via C-terminal domain). Interacts with DDN. Identified in a complex with ACTN4, CASK, IQGAP1, NPHS1, SPTAN1 and SPTBN1. Interacts with DLL1. Found in a complex with IGSF9B and NLGN2; the interaction with IGSF9B is mediated via the PDZ 5 and PDZ 6 domains, while the interaction with NLGN2 is mediated via the WW1, WW2 and PDZ2 domains. Interacts (via PDZ 6 domain) with USH1G (via SAM domain); the interaction is triggered by phosphorylation of USH1G by CK2 and negatively regulates MAGI2-mediated endocytosis. As to expression, expressed in the foot process layer of podocytes of the kidney glomeruli but not in tubules (at protein level). Expressed in the brain.

It localises to the cytoplasm. It is found in the late endosome. The protein resides in the synapse. The protein localises to the synaptosome. Its subcellular location is the cell membrane. It localises to the cytoskeleton. It is found in the microtubule organizing center. The protein resides in the centrosome. The protein localises to the cell projection. Its subcellular location is the cilium. It localises to the centriole. It is found in the photoreceptor inner segment. The protein resides in the photoreceptor outer segment. Functionally, seems to act as scaffold molecule at synaptic junctions by assembling neurotransmitter receptors and cell adhesion proteins. Plays a role in nerve growth factor (NGF)-induced recruitment of RAPGEF2 to late endosomes and neurite outgrowth. May play a role in regulating activin-mediated signaling in neuronal cells. Enhances the ability of PTEN to suppress AKT1 activation. Plays a role in receptor-mediated clathrin-dependent endocytosis which is required for ciliogenesis. This is Membrane-associated guanylate kinase, WW and PDZ domain-containing protein 2 (Magi2) from Rattus norvegicus (Rat).